A 178-amino-acid chain; its full sequence is Large ribosomal subunit protein bL17 (178 aa).

A disordered region spans residues 150–178 (PADEPVVAEENAPQSAVKDAVDECEGKAD). The segment covering 168-178 (DAVDECEGKAD) has biased composition (basic and acidic residues).

This sequence belongs to the bacterial ribosomal protein bL17 family. As to quaternary structure, part of the 50S ribosomal subunit. Contacts protein L32.

This chain is Large ribosomal subunit protein bL17, found in Geobacter metallireducens (strain ATCC 53774 / DSM 7210 / GS-15).